The sequence spans 426 residues: Serine--tRNA ligase (426 aa).

The disordered stretch occupies residues 44–67 (TEKQALQSERNATSKQIGMLKKKG). The segment covering 47-59 (QALQSERNATSKQ) has biased composition (polar residues). Position 231-233 (231-233 (TAE)) interacts with L-serine. Residues 262 to 264 (RRE) and valine 278 each bind ATP. Glutamate 285 is an L-serine binding site. 349–352 (EVSS) contributes to the ATP binding site. Serine 384 lines the L-serine pocket.

The protein belongs to the class-II aminoacyl-tRNA synthetase family. Type-1 seryl-tRNA synthetase subfamily. Homodimer. The tRNA molecule binds across the dimer.

The protein localises to the cytoplasm. The catalysed reaction is tRNA(Ser) + L-serine + ATP = L-seryl-tRNA(Ser) + AMP + diphosphate + H(+). It carries out the reaction tRNA(Sec) + L-serine + ATP = L-seryl-tRNA(Sec) + AMP + diphosphate + H(+). Its pathway is aminoacyl-tRNA biosynthesis; selenocysteinyl-tRNA(Sec) biosynthesis; L-seryl-tRNA(Sec) from L-serine and tRNA(Sec): step 1/1. Functionally, catalyzes the attachment of serine to tRNA(Ser). Is also able to aminoacylate tRNA(Sec) with serine, to form the misacylated tRNA L-seryl-tRNA(Sec), which will be further converted into selenocysteinyl-tRNA(Sec). This is Serine--tRNA ligase from Akkermansia muciniphila (strain ATCC BAA-835 / DSM 22959 / JCM 33894 / BCRC 81048 / CCUG 64013 / CIP 107961 / Muc).